The sequence spans 568 residues: DNA ligase 2 (568 aa).

Glutamate 254 contacts ATP. Lysine 256 (N6-AMP-lysine intermediate) is an active-site residue. ATP contacts are provided by arginine 261, arginine 276, glutamate 306, phenylalanine 346, arginine 425, and lysine 431.

Belongs to the ATP-dependent DNA ligase family. The cofactor is Mg(2+).

The catalysed reaction is ATP + (deoxyribonucleotide)n-3'-hydroxyl + 5'-phospho-(deoxyribonucleotide)m = (deoxyribonucleotide)n+m + AMP + diphosphate.. DNA ligase that seals nicks in double-stranded DNA during DNA replication, DNA recombination and DNA repair. The chain is DNA ligase 2 from Methanosarcina acetivorans (strain ATCC 35395 / DSM 2834 / JCM 12185 / C2A).